Consider the following 361-residue polypeptide: Phosphoserine aminotransferase (361 aa).

Arg-43 is an L-glutamate binding site. Residues 77-78 (AS), Trp-103, Thr-153, Asp-173, and Gln-196 each bind pyridoxal 5'-phosphate. Lys-197 is modified (N6-(pyridoxal phosphate)lysine). 238-239 (NT) is a binding site for pyridoxal 5'-phosphate.

It belongs to the class-V pyridoxal-phosphate-dependent aminotransferase family. SerC subfamily. As to quaternary structure, homodimer. The cofactor is pyridoxal 5'-phosphate.

Its subcellular location is the cytoplasm. The enzyme catalyses O-phospho-L-serine + 2-oxoglutarate = 3-phosphooxypyruvate + L-glutamate. The catalysed reaction is 4-(phosphooxy)-L-threonine + 2-oxoglutarate = (R)-3-hydroxy-2-oxo-4-phosphooxybutanoate + L-glutamate. It functions in the pathway amino-acid biosynthesis; L-serine biosynthesis; L-serine from 3-phospho-D-glycerate: step 2/3. Its pathway is cofactor biosynthesis; pyridoxine 5'-phosphate biosynthesis; pyridoxine 5'-phosphate from D-erythrose 4-phosphate: step 3/5. Its function is as follows. Catalyzes the reversible conversion of 3-phosphohydroxypyruvate to phosphoserine and of 3-hydroxy-2-oxo-4-phosphonooxybutanoate to phosphohydroxythreonine. This is Phosphoserine aminotransferase from Pseudomonas syringae pv. syringae (strain B728a).